The sequence spans 340 residues: UDP-3-O-(3-hydroxymyristoyl)glucosamine N-acyltransferase (340 aa).

H239 (proton acceptor) is an active-site residue.

Belongs to the transferase hexapeptide repeat family. LpxD subfamily. As to quaternary structure, homotrimer.

It catalyses the reaction a UDP-3-O-[(3R)-3-hydroxyacyl]-alpha-D-glucosamine + a (3R)-hydroxyacyl-[ACP] = a UDP-2-N,3-O-bis[(3R)-3-hydroxyacyl]-alpha-D-glucosamine + holo-[ACP] + H(+). It carries out the reaction UDP-3-O-[(3R)-3-hydroxytetradecanoyl]-alpha-D-glucosamine + (3R)-hydroxytetradecanoyl-[ACP] = UDP-2-N,3-O-bis[(3R)-3-hydroxytetradecanoyl]-alpha-D-glucosamine + holo-[ACP] + H(+). Its pathway is glycolipid biosynthesis; lipid IV(A) biosynthesis; lipid IV(A) from (3R)-3-hydroxytetradecanoyl-[acyl-carrier-protein] and UDP-N-acetyl-alpha-D-glucosamine: step 3/6. In terms of biological role, catalyzes the N-acylation of UDP-3-O-(hydroxytetradecanoyl)glucosamine using 3-hydroxytetradecanoyl-ACP as the acyl donor. Is involved in the biosynthesis of lipid A, a phosphorylated glycolipid that anchors the lipopolysaccharide to the outer membrane of the cell. This chain is UDP-3-O-(3-hydroxymyristoyl)glucosamine N-acyltransferase, found in Sodalis glossinidius (strain morsitans).